Here is a 95-residue protein sequence, read N- to C-terminus: Aspartyl/glutamyl-tRNA(Asn/Gln) amidotransferase subunit C (95 aa).

This sequence belongs to the GatC family. In terms of assembly, heterotrimer of A, B and C subunits.

The enzyme catalyses L-glutamyl-tRNA(Gln) + L-glutamine + ATP + H2O = L-glutaminyl-tRNA(Gln) + L-glutamate + ADP + phosphate + H(+). The catalysed reaction is L-aspartyl-tRNA(Asn) + L-glutamine + ATP + H2O = L-asparaginyl-tRNA(Asn) + L-glutamate + ADP + phosphate + 2 H(+). In terms of biological role, allows the formation of correctly charged Asn-tRNA(Asn) or Gln-tRNA(Gln) through the transamidation of misacylated Asp-tRNA(Asn) or Glu-tRNA(Gln) in organisms which lack either or both of asparaginyl-tRNA or glutaminyl-tRNA synthetases. The reaction takes place in the presence of glutamine and ATP through an activated phospho-Asp-tRNA(Asn) or phospho-Glu-tRNA(Gln). This Chloroherpeton thalassium (strain ATCC 35110 / GB-78) protein is Aspartyl/glutamyl-tRNA(Asn/Gln) amidotransferase subunit C.